The sequence spans 429 residues: Ribosomal RNA small subunit methyltransferase B (429 aa).

S-adenosyl-L-methionine contacts are provided by residues cysteine 254–lysine 260, aspartate 277, aspartate 303, and aspartate 322. Cysteine 375 serves as the catalytic Nucleophile.

Belongs to the class I-like SAM-binding methyltransferase superfamily. RsmB/NOP family.

The protein resides in the cytoplasm. It catalyses the reaction cytidine(967) in 16S rRNA + S-adenosyl-L-methionine = 5-methylcytidine(967) in 16S rRNA + S-adenosyl-L-homocysteine + H(+). Functionally, specifically methylates the cytosine at position 967 (m5C967) of 16S rRNA. The protein is Ribosomal RNA small subunit methyltransferase B of Escherichia coli (strain SMS-3-5 / SECEC).